A 40-amino-acid polypeptide reads, in one-letter code: MRAVQDSVRDGTRLAVRSGGHCFESLVDDPAVTTVIDVSE.

This is an uncharacterized protein from Streptomyces peucetius.